We begin with the raw amino-acid sequence, 60 residues long: Phycobilisome degradation protein NblA homolog 2 (60 aa).

This sequence to Synechococcus PCC 7942 NblA and some, to chloroplast ycf18.

This Synechocystis sp. (strain ATCC 27184 / PCC 6803 / Kazusa) protein is Phycobilisome degradation protein NblA homolog 2.